A 432-amino-acid polypeptide reads, in one-letter code: Transcriptional adapter 3 (432 aa).

Lysine 21 participates in a covalent cross-link: Glycyl lysine isopeptide (Lys-Gly) (interchain with G-Cter in SUMO2). The stretch at 40–69 (IEELDTLQLELETLLSSASRRLRVLEAETQ) forms a coiled coil. Residues 87 to 127 (GRDHELGAPPKHGKPKKQKLEGKTGHGPGPGPGRPKSKNVQ) form a disordered region. Lysine 129 is covalently cross-linked (Glycyl lysine isopeptide (Lys-Gly) (interchain with G-Cter in SUMO2)). Residues 272-319 (NIISPMEDSPIPDMSGKESGADGASTSPRNQNKPFSVPHTKSLESRIK) form a disordered region. 2 positions are modified to phosphoserine: serine 280 and serine 298. Polar residues predominate over residues 295–305 (ASTSPRNQNKP). Residues 367-407 (LLRLAKEEVSRQELRQRVRMADNEVMDAFRKIMAARQKKRT) are a coiled coil. The residue at position 418 (lysine 418) is an N6-acetyllysine.

The protein belongs to the NGG1 family. The PCAF complex is composed of a number of TBP-associated factors (TAFS), such as TAF5, TAF5L, TAF6, TAF6L, TAF9, TAF10 and TAF12, PCAF, and also PCAF-associated factors (PAFs), such as TADA2L/ADA2, TADA3L/ADA3 and SPT3. Interacts directly with TADA2L and PCAF and also with the high-risk HPV oncoprotein E6. Component of the STAGA transcription coactivator-HAT complex, at least composed of SUPT3H, GCN5L2, TAF5L, TAF6L, SUPT7L, TADA3L, TAD1L, TAF10, TAF12, TRRAP and TAF9. Component of the TFTC-HAT complex. Component of the ADA2A-containing complex (ATAC), composed of KAT14, KAT2A, TADA2L, TADA3L, ZZ3, MBIP, WDR5, YEATS2, CCDC101 and DR1.

The protein localises to the nucleus. Its function is as follows. Functions as a component of the PCAF complex. The PCAF complex is capable of efficiently acetylating histones in a nucleosomal context. The PCAF complex could be considered as the human version of the yeast SAGA complex. Also known as a coactivator for p53/TP53-dependent transcriptional activation. Component of the ATAC complex, a complex with histone acetyltransferase activity on histones H3 and H4. The protein is Transcriptional adapter 3 (Tada3) of Mus musculus (Mouse).